Consider the following 317-residue polypeptide: Glycerol-3-phosphate dehydrogenase [NAD(P)+] (317 aa).

Positions 14, 15, 35, and 109 each coordinate NADPH. Residues Lys109 and Gly137 each coordinate sn-glycerol 3-phosphate. Ala141 is an NADPH binding site. Residues Lys192, Asp248, Ser258, Arg259, and Asn260 each coordinate sn-glycerol 3-phosphate. Residue Lys192 is the Proton acceptor of the active site. Arg259 provides a ligand contact to NADPH. NADPH is bound by residues Leu283 and Glu285.

Belongs to the NAD-dependent glycerol-3-phosphate dehydrogenase family.

It localises to the cytoplasm. The catalysed reaction is sn-glycerol 3-phosphate + NAD(+) = dihydroxyacetone phosphate + NADH + H(+). It catalyses the reaction sn-glycerol 3-phosphate + NADP(+) = dihydroxyacetone phosphate + NADPH + H(+). It functions in the pathway membrane lipid metabolism; glycerophospholipid metabolism. Functionally, catalyzes the reduction of the glycolytic intermediate dihydroxyacetone phosphate (DHAP) to sn-glycerol 3-phosphate (G3P), the key precursor for phospholipid synthesis. The polypeptide is Glycerol-3-phosphate dehydrogenase [NAD(P)+] (Rickettsia akari (strain Hartford)).